Consider the following 146-residue polypeptide: UPF0742 protein PB2B2.17c (146 aa).

The helical transmembrane segment at 38-60 (LTVKYCLAVKLLIYLLYCWYIYS) threads the bilayer.

It belongs to the UPF0742 family.

It localises to the cytoplasm. The protein localises to the nucleus membrane. The sequence is that of UPF0742 protein PB2B2.17c from Schizosaccharomyces pombe (strain 972 / ATCC 24843) (Fission yeast).